A 97-amino-acid polypeptide reads, in one-letter code: Putative ankyrin repeat protein RBE_0357 (97 aa).

Residues 24 to 54 form an ANK repeat; the sequence is YGKTALHYAYTKRNIDIIKILLKCPGIKICI.

The polypeptide is Putative ankyrin repeat protein RBE_0357 (Rickettsia bellii (strain RML369-C)).